Consider the following 253-residue polypeptide: Zinc finger protein JAGGED (253 aa).

A disordered region spans residues 1-46 (MRHEENYLDLNNLPDDFSKDGNKQALEEGSSSGQRKKKGSKEGKDE). A compositionally biased stretch (basic and acidic residues) spans 16 to 26 (DFSKDGNKQAL). The segment at 51 to 73 (YECRFCSLKFCKSQALGGHMNRH) adopts a C2H2-type zinc-finger fold.

Interacts with GATA18/HAN. As to expression, expressed in the emerging leaf, sepal, petal, stamen and carpel primordia. Not expressed in the apical shoot meristem (SAM).

It is found in the nucleus. Functionally, controls the morphogenesis of lateral organs. Functions in lateral organ shape and is sufficient to induce proliferation and growth of lateral organ tissue. Is necessary and sufficient for bract formation, but its expression is excluded from the cryptic bract, which could be a cause of bractless flowers in Arabidopsis. Participates with FIL and YAB3 in regulating valve margin development. Functions with JGL to define stamen and carpel shape. Functions with AS1 and AS2 in the sepal and petal primordia to repress boundary-specifying genes for normal development of the organs. This Arabidopsis thaliana (Mouse-ear cress) protein is Zinc finger protein JAGGED (JAG).